A 306-amino-acid chain; its full sequence is Palmitoyl-protein thioesterase ABHD10, mitochondrial (306 aa).

A mitochondrion-targeting transit peptide spans 1-52 (MAVARLAAVAAWVPCRSWGWAAVPFGPHRGLSVLLARIPQRAPRWLPACRQK). The AB hydrolase-1 domain maps to 78-178 (IIFIPGYLSY…VVALIGVATA (101 aa)). Catalysis depends on charge relay system residues Ser-152, Asp-249, and His-279.

This sequence belongs to the AB hydrolase superfamily.

The protein localises to the mitochondrion. The catalysed reaction is S-hexadecanoyl-L-cysteinyl-[protein] + H2O = L-cysteinyl-[protein] + hexadecanoate + H(+). It catalyses the reaction mycophenolic acid O-acyl-beta-D-glucuronide + H2O = mycophenolate + D-glucuronate + H(+). Inhibited by palmostatin-B. Its function is as follows. Acts as an acyl-protein thioesterase that hydrolyzes fatty acids from acylated residues in proteins. Regulates the mitochondrial S-depalmitoylation of the nucleophilic active site residue of peroxiredoxin-5/PRDX5, a key antioxidant protein, therefore modulating mitochondrial antioxidant ability. Also catalyzes the deglucuronidation of mycophenolic acid acyl-glucuronide, an active metabolite of the immunosuppressant drug mycophenolate. This Homo sapiens (Human) protein is Palmitoyl-protein thioesterase ABHD10, mitochondrial.